Consider the following 70-residue polypeptide: Putative microRNA 17 host gene protein (70 aa).

Topologically, residues 1 to 20 are cytoplasmic; the sequence is MFCHVDVKISSKRYTWTKLP. Residues 21–43 traverse the membrane as a helical segment; sequence LNVPKLVLIYLQSHFVLFFFSMC. Topologically, residues 44 to 70 are extracellular; the sequence is QSIWERPAIGRATTSSASWMVGYDCLL.

In terms of tissue distribution, highly expressed in B-cell lymphoma and lung cancer.

The protein localises to the membrane. This is Putative microRNA 17 host gene protein (MIR17HG) from Homo sapiens (Human).